Consider the following 298-residue polypeptide: ADP/ATP translocase 1 (298 aa).

At 1–7 (MSDQALS) the chain is on the mitochondrial intermembrane side. N-acetylserine is present on serine 2. A Solcar 1 repeat occupies 6-98 (LSFLKDFLAG…FAFKDKYKQI (93 aa)). A Phosphoserine modification is found at serine 7. The helical transmembrane segment at 8–37 (FLKDFLAGGVAAAVSKTAVAPIERVKLLLQ) threads the bilayer. At 38–74 (VQHASKQISAEKQYKGIIDCVVRIPKEQGFLSFWRGN) the chain is on the mitochondrial matrix side. Residue lysine 52 is modified to N6,N6,N6-trimethyllysine. The chain crosses the membrane as a helical span at residues 75–99 (LANVIRYFPTQALNFAFKDKYKQIF). Arginine 80 and lysine 92 together coordinate ADP. Over 100-109 (LGGVDRHKQF) the chain is Mitochondrial intermembrane. The chain crosses the membrane as a helical span at residues 110–130 (WRYFAGNLASGGAAGATSLCF). Solcar repeat units lie at residues 111-201 (RYFA…AKGM) and 212-297 (VSWM…IKKY). Over 131-178 (VYPLDFARTRLAADVGKGAAQREFSGLGNCLTKIFKSDGLRGLYQGFN) the chain is Mitochondrial matrix. Lysine 147 is modified (N6-succinyllysine). The residue at position 160 (cysteine 160) is an S-nitrosocysteine. Residues 179-199 (VSVQGIIIYRAAYFGVYDTAK) form a helical membrane-spanning segment. Topologically, residues 200–210 (GMLPDPKNVHI) are mitochondrial intermembrane. Residues 211–231 (IVSWMIAQTVTAVAGLVSYPF) traverse the membrane as a helical segment. Topologically, residues 232–273 (DTVRRRMMMQSGRKGADIMYTGTVDCWKKIAKDEGAKAFFKG) are mitochondrial matrix. Arginine 235 serves as a coordination point for ADP. An important for transport activity region spans residues 235–240 (RRRMMM). Residues 235–240 (RRRMMM) carry the Nucleotide carrier signature motif motif. 2 positions are modified to N6-succinyllysine: lysine 245 and lysine 272. A helical transmembrane segment spans residues 274–291 (AWSNVLRGMGGAFVLVLY). Topologically, residues 292–298 (DEIKKYV) are mitochondrial intermembrane.

The protein belongs to the mitochondrial carrier (TC 2.A.29) family. Monomer. Found in a complex with ARL2, ARL2BP and SLC25A4/ANT1. Interacts with ARL2BP. Interacts with TIMM44; leading to inhibit the presequence translocase TIMM23, thereby promoting stabilization of PINK1. In terms of processing, under cell death induction, transglutaminated by TGM2. Transglutamination leads to formation of covalent cross-links between a glutamine and the epsilon-amino group of a lysine residue, forming polymers.

The protein resides in the mitochondrion inner membrane. The protein localises to the membrane. The enzyme catalyses ADP(in) + ATP(out) = ADP(out) + ATP(in). It carries out the reaction H(+)(in) = H(+)(out). With respect to regulation, the matrix-open state (m-state) is inhibited by the membrane-permeable bongkrekic acid (BKA). The cytoplasmic-open state (c-state) is inhibited by the membrane-impermeable toxic inhibitor carboxyatractyloside (CATR). Proton transporter activity is inhibited by ADP:ATP antiporter activity. Functionally, ADP:ATP antiporter that mediates import of ADP into the mitochondrial matrix for ATP synthesis, and export of ATP out to fuel the cell. Cycles between the cytoplasmic-open state (c-state) and the matrix-open state (m-state): operates by the alternating access mechanism with a single substrate-binding site intermittently exposed to either the cytosolic (c-state) or matrix (m-state) side of the inner mitochondrial membrane. In addition to its ADP:ATP antiporter activity, also involved in mitochondrial uncoupling and mitochondrial permeability transition pore (mPTP) activity. Plays a role in mitochondrial uncoupling by acting as a proton transporter: proton transport uncouples the proton flows via the electron transport chain and ATP synthase to reduce the efficiency of ATP production and cause mitochondrial thermogenesis. Proton transporter activity is inhibited by ADP:ATP antiporter activity, suggesting that SLC25A4/ANT1 acts as a master regulator of mitochondrial energy output by maintaining a delicate balance between ATP production (ADP:ATP antiporter activity) and thermogenesis (proton transporter activity). Proton transporter activity requires free fatty acids as cofactor, but does not transport it. Probably mediates mitochondrial uncoupling in tissues that do not express UCP1. Also plays a key role in mPTP opening, a non-specific pore that enables free passage of the mitochondrial membranes to solutes of up to 1.5 kDa, and which contributes to cell death. It is however unclear if SLC25A4/ANT1 constitutes a pore-forming component of mPTP or regulates it. Acts as a regulator of mitophagy independently of ADP:ATP antiporter activity: promotes mitophagy via interaction with TIMM44, leading to inhibit the presequence translocase TIMM23, thereby promoting stabilization of PINK1. This chain is ADP/ATP translocase 1, found in Oryctolagus cuniculus (Rabbit).